The sequence spans 447 residues: N-succinylarginine dihydrolase (447 aa).

Residues 19-28 (AGLSFGNEAS), asparagine 110, and 137-138 (HR) contribute to the substrate site. Residue glutamate 174 is part of the active site. Arginine 212 serves as a coordination point for substrate. Histidine 248 is a catalytic residue. Substrate-binding residues include aspartate 250 and asparagine 359. Cysteine 365 functions as the Nucleophile in the catalytic mechanism.

Belongs to the succinylarginine dihydrolase family. As to quaternary structure, homodimer.

It catalyses the reaction N(2)-succinyl-L-arginine + 2 H2O + 2 H(+) = N(2)-succinyl-L-ornithine + 2 NH4(+) + CO2. The protein operates within amino-acid degradation; L-arginine degradation via AST pathway; L-glutamate and succinate from L-arginine: step 2/5. Catalyzes the hydrolysis of N(2)-succinylarginine into N(2)-succinylornithine, ammonia and CO(2). This is N-succinylarginine dihydrolase from Escherichia coli O17:K52:H18 (strain UMN026 / ExPEC).